A 72-amino-acid polypeptide reads, in one-letter code: UPF0150 protein jhp_0960 (72 aa).

The protein belongs to the UPF0150 family.

This is UPF0150 protein jhp_0960 from Helicobacter pylori (strain J99 / ATCC 700824) (Campylobacter pylori J99).